The following is a 186-amino-acid chain: Peptidyl-tRNA hydrolase (186 aa).

A tRNA-binding site is contributed by Tyr-14. The active-site Proton acceptor is His-19. TRNA contacts are provided by Tyr-64, Asn-66, and Asn-112.

Belongs to the PTH family. Monomer.

It localises to the cytoplasm. The enzyme catalyses an N-acyl-L-alpha-aminoacyl-tRNA + H2O = an N-acyl-L-amino acid + a tRNA + H(+). Functionally, hydrolyzes ribosome-free peptidyl-tRNAs (with 1 or more amino acids incorporated), which drop off the ribosome during protein synthesis, or as a result of ribosome stalling. Catalyzes the release of premature peptidyl moieties from peptidyl-tRNA molecules trapped in stalled 50S ribosomal subunits, and thus maintains levels of free tRNAs and 50S ribosomes. This is Peptidyl-tRNA hydrolase from Geobacillus thermodenitrificans (strain NG80-2).